We begin with the raw amino-acid sequence, 1118 residues long: Collagenase ColG (1118 aa).

An N-terminal signal peptide occupies residues Met1–Ala45. Residues Lys46–Ser110 constitute a propeptide that is removed on maturation. Positions Ile111–Leu786 are S1 metalloprotease domain, degrades both FALGPA (furylacryloyl-Leu-Gly-Pro-Ala) and type I collagen. The tract at residues Tyr119–Asp388 is activator domain required for full activity on collagen. The catalytic subdomain stretch occupies residues Gly389–Gly670. Positions Lys396–Lys1118 are degrades soluble FALGPA peptide (furylacryloyl-Leu-Gly-Pro-Ala) but not type I collagen. Residue Glu498 coordinates Ca(2+). His523 serves as a coordination point for Zn(2+). Glu524 is an active-site residue. A Zn(2+)-binding site is contributed by His527. 3 residues coordinate Ca(2+): Ala531, Val535, and Gly537. Glu555 provides a ligand contact to Zn(2+). Positions Asp679–Ala790 are helper subdomain. The tract at residues Thr787–Asp882 is S2 domain. The Ca(2+) site is built by Asn795, Lys796, Asp823, Asp825, Asp864, Glu890, Glu892, Asn894, Asp913, Asp918, Ala920, Asp921, Glu1009, Glu1011, Asn1013, Asp1014, Ser1032, Asp1037, Arg1039, and Asp1040. The region spanning Ala797–Thr885 is the PKD domain. The interval Pro886 to Gly1003 is S3a collagen-binding domain. Residues Lys1008–Lys1118 are S3b collagen-binding domain. A collagen-binding region spans residues Leu1102–Tyr1106.

This sequence belongs to the peptidase M9B family. Collagenase subfamily. It depends on Ca(2+) as a cofactor. Requires Zn(2+) as cofactor. Upon purification gives 67 kDa, 78 kDa, 82 kDa and 116 kDa (full-length) proteins all of which have the same N-terminus; only the longest form digests insoluble collagen. At least 2 in vivo isolated forms (C1b and C1c) are missing the second collagen-binding domain, ending on Lys-1006 and Lys-1018 respectively.

Its subcellular location is the secreted. The catalysed reaction is Digestion of native collagen in the triple helical region at Xaa-|-Gly bonds. With synthetic peptides, a preference is shown for Gly at P3 and P1', Pro and Ala at P2 and P2', and hydroxyproline, Ala or Arg at P3'.. Inhibited by 1-10-phenanthroline. Inhibited by peptidomimetic isoamyl-phosphonyl-Gly-Pro-Ala, which binds to Zn(2+). Inhibited by broad-spectrum zinc metalloprotease inhibitor batimastat. N-aryl mercaptoacetamide-based inhibitors have been isolated that act on clostridial collagenases with submicromolar affinity while having negligibile activity on human collagenases. Its function is as follows. Clostridial collagenases are among the most efficient degraders of eukaryotic collagen known; saprophytes use collagen as a carbon source while pathogens additionally digest collagen to aid in host colonization. Has both tripeptidylcarboxypeptidase on Gly-X-Y and endopeptidase activities; the endopeptidase cuts within the triple helix region of collagen while tripeptidylcarboxypeptidase successively digests the exposed ends, thus clostridial collagenases can digest large sections of collagen. Active on soluble type I collagen, insoluble collagen, azocoll, soluble PZ-peptide (all collagenase substrates) and gelatin. The full-length protein has collagenase activity, while the in vivo derived C-terminally truncated shorter versions only act on gelatin. In vitro digestion of soluble calf skin collagen fibrils requires both ColG and ColH; ColG forms missing the second collagen-binding domain are also synergistic with ColH, although their overall efficiency is decreased. The activator domain (residues 119-388) and catalytic subdomain (389-670) open and close around substrate using a Gly-rich hinge (387-397), allowing digestion when the protein is closed. Binding of collagen requires Ca(2+) and is inhibited by EGTA; the collagen-binding domain (CBD, S3a plus S3b) specifically recognizes the triple-helical conformation made by 3 collagen protein chains in the triple-helical region. Isolated CBD (S3a plus S3b) binds collagen fibrils and sheets of many tissues. The polypeptide is Collagenase ColG (Hathewaya histolytica (Clostridium histolyticum)).